Reading from the N-terminus, the 327-residue chain is GMP reductase (327 aa).

Residue cysteine 175 is the Thioimidate intermediate of the active site. 204–227 (IIADGGIRTNGDVAKSIRFGATMV) lines the NADP(+) pocket.

Belongs to the IMPDH/GMPR family. GuaC type 2 subfamily.

The enzyme catalyses IMP + NH4(+) + NADP(+) = GMP + NADPH + 2 H(+). In terms of biological role, catalyzes the irreversible NADPH-dependent deamination of GMP to IMP. It functions in the conversion of nucleobase, nucleoside and nucleotide derivatives of G to A nucleotides, and in maintaining the intracellular balance of A and G nucleotides. The chain is GMP reductase from Bacillus cereus (strain ZK / E33L).